The chain runs to 5628 residues: Polyketide synthase ThaG (5628 aa).

One can recognise a Ketosynthase family 3 (KS3) 1 domain in the interval 13 to 448 (HDDIAVIGIA…GTNAHVVLRE (436 aa)). Residues Cys184, His319, and His361 each act as for beta-ketoacyl synthase 1 activity in the active site. Disordered stretches follow at residues 552-613 (GNLV…DGPT) and 1156-1183 (ASPGAASSGAAAPNAASDASRDTERAEA). Residues 559 to 589 (GPHDEQADHDGSGEHGEHGERARAGADDLSR) show a composition bias toward basic and acidic residues. Positions 1156–1173 (ASPGAASSGAAAPNAASD) are enriched in low complexity. The span at 1174-1183 (ASRDTERAEA) shows a compositional bias: basic and acidic residues. One can recognise a Carrier 1 domain in the interval 1209 to 1286 (AHGSARLPAL…RLAGHLATRL (78 aa)). At Ser1246 the chain carries O-(pantetheine 4'-phosphoryl)serine. A Ketosynthase family 3 (KS3) 2 domain is found at 1373 to 1781 (YEPIAIVGMS…GTNAHVIVEA (409 aa)). Residues Cys1529, His1664, and His1704 each act as for beta-ketoacyl synthase 2 activity in the active site. The N-terminal hotdog fold 1 stretch occupies residues 1967–2099 (AREPGARERA…GVVDELNEPA (133 aa)). The PKS/mFAS DH 1 domain maps to 1967–2261 (AREPGARERA…SARWRKLAGA (295 aa)). His1999 (proton acceptor; for dehydratase activity 1) is an active-site residue. The C-terminal hotdog fold 1 stretch occupies residues 2113 to 2261 (AGERVDGAAL…SARWRKLAGA (149 aa)). The active-site Proton donor; for dehydratase activity 1 is Asp2175. Residues 2426-2446 (DADEDDRDGREPAGGPPLRDD) form a disordered region. One can recognise a Carrier 2 domain in the interval 2702 to 2780 (PAARVDLHAL…AIARALDASA (79 aa)). The tract at residues 2817 to 2836 (TPPDAGAPQRGAHAAAAEGS) is disordered. Residues 2822–2835 (GAPQRGAHAAAAEG) show a composition bias toward low complexity. Residues 2862 to 2935 (ARVGARLSAL…ELTDYFVRRH (74 aa)) form the Carrier 3 domain. O-(pantetheine 4'-phosphoryl)serine is present on Ser2896. In terms of domain architecture, Ketosynthase family 3 (KS3) 3 spans 3005 to 3430 (ADAIAVIGLA…GANAHVIVRE (426 aa)). Residues Cys3175, His3310, and His3351 each act as for beta-ketoacyl synthase 3 activity in the active site. Positions 3526–3546 (PGKKQLRGNGRARRGDAPPAG) are disordered. Positions 3621–3743 (HPMLDANRSE…GRSPSRAARG (123 aa)) are N-terminal hotdog fold 2. A PKS/mFAS DH 2 domain is found at 3621–3895 (HPMLDANRSE…SRAAASWRTA (275 aa)). The active-site Proton acceptor; for dehydratase activity 2 is the His3650. Positions 3758–3895 (RAAPAFDADA…SRAAASWRTA (138 aa)) are C-terminal hotdog fold 2. The active-site Proton donor; for dehydratase activity 2 is the Asp3818. Positions 3917-3942 (PAAESPSAATSTSAATSPAISTSAAT) are disordered. A Carrier 4 domain is found at 4840 to 4914 (TRTAALLRSL…ALAAYVGSQL (75 aa)). Ser4874 carries the O-(pantetheine 4'-phosphoryl)serine modification. The tract at residues 4960–4992 (APRARTGADAPDTSLASSASSISSARASSPASP) is disordered. Residues 4998-5424 (SFDVAIVGAS…GVNAHVVLEE (427 aa)) enclose the Ketosynthase family 3 (KS3) 4 domain. Residues Cys5158, His5293, and His5339 each act as for beta-ketoacyl synthase 4 activity in the active site. Positions 5470–5544 (ARIEAVIRDA…ALRDHVAERI (75 aa)) constitute a Carrier 5 domain. O-(pantetheine 4'-phosphoryl)serine is present on Ser5504. Positions 5573 to 5603 (VSEATEASDASEASDASEASEASEASEASKA) are disordered.

Requires pantetheine 4'-phosphate as cofactor.

The protein localises to the cytoplasm. It functions in the pathway antibiotic biosynthesis. Functionally, involved in production of the polyketide antibiotic thailandamide. The polypeptide is Polyketide synthase ThaG (Burkholderia thailandensis (strain ATCC 700388 / DSM 13276 / CCUG 48851 / CIP 106301 / E264)).